Consider the following 299-residue polypeptide: Protoheme IX farnesyltransferase 1 (299 aa).

The next 8 membrane-spanning stretches (helical) occupy residues 25–45, 47–67, 95–115, 119–139, 147–167, 173–193, 226–246, and 279–299; these read VVVL…RAGV, WTVL…AAAV, TGAL…LLTF, LTAW…TGFL, IVIG…AATG, PLLL…ALAI, ALLA…LYLI, and IWYL…LLNL.

The protein belongs to the UbiA prenyltransferase family. Protoheme IX farnesyltransferase subfamily.

It localises to the cell inner membrane. It catalyses the reaction heme b + (2E,6E)-farnesyl diphosphate + H2O = Fe(II)-heme o + diphosphate. It functions in the pathway porphyrin-containing compound metabolism; heme O biosynthesis; heme O from protoheme: step 1/1. Its function is as follows. Converts heme B (protoheme IX) to heme O by substitution of the vinyl group on carbon 2 of heme B porphyrin ring with a hydroxyethyl farnesyl side group. This Pseudomonas fluorescens (strain Pf0-1) protein is Protoheme IX farnesyltransferase 1.